The sequence spans 194 residues: dCTP deaminase (194 aa).

Residues 110–115 (RSSLAR), D128, 136–138 (VLE), Y171, K178, and Q182 each bind dCTP. E138 serves as the catalytic Proton donor/acceptor.

It belongs to the dCTP deaminase family. Homotrimer.

It carries out the reaction dCTP + H2O + H(+) = dUTP + NH4(+). It functions in the pathway pyrimidine metabolism; dUMP biosynthesis; dUMP from dCTP (dUTP route): step 1/2. Catalyzes the deamination of dCTP to dUTP. This is dCTP deaminase from Histophilus somni (strain 2336) (Haemophilus somnus).